Here is a 440-residue protein sequence, read N- to C-terminus: Ferreportin (440 aa).

Over 1–8 the chain is Cytoplasmic; sequence MKVQSLLR. The helical transmembrane segment at 9 to 38 threads the bilayer; sequence IETQLLLGRLLTRSGDQAWDFVVPFALLVI. Asp-24 serves as a coordination point for Ca(2+). Topologically, residues 39–42 are extracellular; sequence FPGK. A helical transmembrane segment spans residues 43 to 69; the sequence is LQVAAFYYLIVKIGTFLLTPSSGKWID. Topologically, residues 70-72 are cytoplasmic; that stretch reads THP. Residues 73–103 traverse the membrane as a helical segment; that stretch reads RIQVVKWGVWLQFFAILAGMVFFGMLDGLVR. Residue Gln-84 coordinates Ca(2+). The Extracellular segment spans residues 104-109; sequence AGGRES. The chain crosses the membrane as a helical span at residues 110 to 145; sequence WLLSVLFIALALSGVMASLGSQITDISVGNDLAPSL. The Cytoplasmic segment spans residues 146 to 147; that stretch reads VA. A helical transmembrane segment spans residues 148–176; that stretch reads PEKLTHFNSWLRRIDLATEVGAPILAGAL. Topologically, residues 177-186 are extracellular; the sequence is FAFHPEQLPL. Residues 187 to 213 form a helical membrane-spanning segment; sequence AGLFLIGLWNLVSFVPEYFLLRNVIQR. Positions 196 and 203 each coordinate Ca(2+). The Cytoplasmic segment spans residues 214 to 242; sequence SGLKIKVLTEAQSWKDTFHINLRGSFSDP. Residues 243-271 form a helical membrane-spanning segment; sequence IFWLILSYALLWLSVLSPHGVLLAAYLKD. Topologically, residues 272–276 are extracellular; the sequence is EMRLP. Residues 277-304 traverse the membrane as a helical segment; the sequence is ETEIGLFRGLGAVFGLISTVSFPYLVRR. The Cytoplasmic segment spans residues 305 to 306; that stretch reads LG. A helical transmembrane segment spans residues 307-329; it reads LISSSRWHLGFQGVTLGIAVTAF. At 330–335 the chain is on the extracellular side; the sequence is AMGSTA. A helical membrane pass occupies residues 336 to 365; it reads SVYVFLGCILLSRVGLYGFSNGEFELRQRL. At 366–370 the chain is on the cytoplasmic side; sequence IPEGR. A helical membrane pass occupies residues 371 to 395; the sequence is RGELNSLSSLTTTSATLILFSAGSL. The Extracellular portion of the chain corresponds to 396 to 398; sequence LPQ. The helical transmembrane segment at 399–424 threads the bilayer; sequence TEDFKYLVYVSLAAVLLANVVFIKWS. Residues 425 to 440 lie on the Cytoplasmic side of the membrane; the sequence is SRQGVVTSGAAEPVES.

Belongs to the ferroportin (FP) (TC 2.A.100) family. Requires Ca(2+) as cofactor.

The protein resides in the cell membrane. Functionally, iron transpoter that exports Fe(2+) from the cell. Also binds to Co(2+) and Ni(2+). May act as a multivalent divalent metal transporter. The transporter is composed of 12 transmembrane (TM) helices organized into N-terminal (TM1-6) and C-terminal (TM7-12) domains. The substrate-binding site is formed at the interface of the two domains and is alternately accessible from either side of the membrane. The transport cycle is viewed as a series of ligand-induced conformational changes that include open outward and open inward states. This Bdellovibrio bacteriovorus (strain ATCC 15356 / DSM 50701 / NCIMB 9529 / HD100) protein is Ferreportin (slc39).